We begin with the raw amino-acid sequence, 366 residues long: UPF0329 protein ECU01_0130/ECU01_1480/ECU08_0060 (366 aa).

The segment at 325 to 366 (IRKEEKRIRKEEERAKNEEELLRMVESEEGKSGEGEEGCRRG) is disordered.

The protein belongs to the UPF0329 family.

The sequence is that of UPF0329 protein ECU01_0130/ECU01_1480/ECU08_0060 from Encephalitozoon cuniculi (strain GB-M1) (Microsporidian parasite).